A 584-amino-acid chain; its full sequence is DNA mismatch repair protein MutL (584 aa).

This sequence belongs to the DNA mismatch repair MutL/HexB family.

This protein is involved in the repair of mismatches in DNA. It is required for dam-dependent methyl-directed DNA mismatch repair. May act as a 'molecular matchmaker', a protein that promotes the formation of a stable complex between two or more DNA-binding proteins in an ATP-dependent manner without itself being part of a final effector complex. The chain is DNA mismatch repair protein MutL from Buchnera aphidicola subsp. Acyrthosiphon pisum (strain Tuc7).